A 450-amino-acid chain; its full sequence is MRRHAIILAAGKGTRMKSKKYKVLHEVAGKPMVEHVLESVKGSGVDQVVTIVGHGAESVKGHLGERSLYSFQEKQLGTAHAVQMAKSHLEDKEGTTIVVCGDTPLITKETLETLIAHHEDANAQATVLSASIQQPYGYGRIVRNASGRLERIVEEKDATQAEKDINEISSGIFAFNNKTLFEKLTQVKNDNAQGEYYLPDVLSLILNDGGIVEVYRTNDVEEIMGVNDRVMLSQAEKAMQRRTNHYHMLNGVTIIDPDSTFIGPDVTIGSDTVIEPGVRINGRTEIGEDVVIGQYSEINNSTIENGACIQQSVVNDASVGANTKVGPFAQLRPGAQLGADVKVGNFVEIKKADLKDGAKVSHLSYIGDAVIGERTNIGCGTITVNYDGENKFKTIVGKDSFVGCNVNLVAPVTIGDDVLVAAGSTITDDVPNDSLAVARARQTTKEGYRK.

The interval 1–229 (MRRHAIILAA…VEEIMGVNDR (229 aa)) is pyrophosphorylase. Residues 8–11 (LAAG), lysine 22, glutamine 72, and 77–78 (GT) contribute to the UDP-N-acetyl-alpha-D-glucosamine site. Aspartate 102 serves as a coordination point for Mg(2+). The UDP-N-acetyl-alpha-D-glucosamine site is built by glycine 139, glutamate 154, and asparagine 227. Asparagine 227 is a Mg(2+) binding site. Residues 230 to 250 (VMLSQAEKAMQRRTNHYHMLN) form a linker region. The tract at residues 251–450 (GVTIIDPDST…RQTTKEGYRK (200 aa)) is N-acetyltransferase. 2 residues coordinate UDP-N-acetyl-alpha-D-glucosamine: arginine 332 and lysine 350. Histidine 362 (proton acceptor) is an active-site residue. Positions 365 and 376 each coordinate UDP-N-acetyl-alpha-D-glucosamine. Acetyl-CoA contacts are provided by residues 385-386 (NY), alanine 422, and arginine 439.

This sequence in the N-terminal section; belongs to the N-acetylglucosamine-1-phosphate uridyltransferase family. The protein in the C-terminal section; belongs to the transferase hexapeptide repeat family. In terms of assembly, homotrimer. Requires Mg(2+) as cofactor.

It localises to the cytoplasm. The enzyme catalyses alpha-D-glucosamine 1-phosphate + acetyl-CoA = N-acetyl-alpha-D-glucosamine 1-phosphate + CoA + H(+). The catalysed reaction is N-acetyl-alpha-D-glucosamine 1-phosphate + UTP + H(+) = UDP-N-acetyl-alpha-D-glucosamine + diphosphate. It functions in the pathway nucleotide-sugar biosynthesis; UDP-N-acetyl-alpha-D-glucosamine biosynthesis; N-acetyl-alpha-D-glucosamine 1-phosphate from alpha-D-glucosamine 6-phosphate (route II): step 2/2. The protein operates within nucleotide-sugar biosynthesis; UDP-N-acetyl-alpha-D-glucosamine biosynthesis; UDP-N-acetyl-alpha-D-glucosamine from N-acetyl-alpha-D-glucosamine 1-phosphate: step 1/1. It participates in bacterial outer membrane biogenesis; LPS lipid A biosynthesis. Its function is as follows. Catalyzes the last two sequential reactions in the de novo biosynthetic pathway for UDP-N-acetylglucosamine (UDP-GlcNAc). The C-terminal domain catalyzes the transfer of acetyl group from acetyl coenzyme A to glucosamine-1-phosphate (GlcN-1-P) to produce N-acetylglucosamine-1-phosphate (GlcNAc-1-P), which is converted into UDP-GlcNAc by the transfer of uridine 5-monophosphate (from uridine 5-triphosphate), a reaction catalyzed by the N-terminal domain. The polypeptide is Bifunctional protein GlmU (Staphylococcus aureus (strain Mu50 / ATCC 700699)).